Reading from the N-terminus, the 415-residue chain is Heterogeneous nuclear ribonucleoprotein F (415 aa).

Residue Met1 is modified to N-acetylmethionine. Met2 carries the post-translational modification N-acetylmethionine; in Heterogeneous nuclear ribonucleoprotein F, N-terminally processed. The region spanning 11-90 (YVVKLRGLPW…RYIEVFKSHR (80 aa)) is the RRM 1 domain. Lys72 participates in a covalent cross-link: Glycyl lysine isopeptide (Lys-Gly) (interchain with G-Cter in SUMO). The interval 81 to 86 (RYIEVF) is interaction with RNA. Residue Lys87 forms a Glycyl lysine isopeptide (Lys-Gly) (interchain with G-Cter in SUMO2) linkage. Ser104, Ser107, and Ser161 each carry phosphoserine. Positions 111 to 188 (GFVRLRGLPF…RYIEVFKSSQ (78 aa)) constitute an RRM 2 domain. Lys167 participates in a covalent cross-link: Glycyl lysine isopeptide (Lys-Gly) (interchain with G-Cter in SUMO2). Residues 179 to 184 (RYIEVF) are interaction with RNA. Lys185 is covalently cross-linked (Glycyl lysine isopeptide (Lys-Gly) (interchain with G-Cter in SUMO2)). Phosphoserine is present on residues Ser187, Ser193, and Ser195. Lys200 carries the post-translational modification N6-acetyllysine; alternate. Lys200 is covalently cross-linked (Glycyl lysine isopeptide (Lys-Gly) (interchain with G-Cter in SUMO2); alternate). Phosphothreonine is present on Thr215. Residue Lys224 is modified to N6-acetyllysine; alternate. Residue Lys224 forms a Glycyl lysine isopeptide (Lys-Gly) (interchain with G-Cter in SUMO2); alternate linkage. A Phosphoserine modification is found at Ser265. The 78-residue stretch at 289–366 (HCVHMRGLPY…IELFLNSTTG (78 aa)) folds into the RRM 3 domain. Residues 355 to 360 (RYIELF) form an interaction with RNA region.

In terms of assembly, identified in the spliceosome C complex. Interacts with AGO1, AGO2, TBP and TXNL4/DIM1. Post-translationally, sumoylated.

Its subcellular location is the nucleus. The protein resides in the nucleoplasm. In terms of biological role, component of the heterogeneous nuclear ribonucleoprotein (hnRNP) complexes which provide the substrate for the processing events that pre-mRNAs undergo before becoming functional, translatable mRNAs in the cytoplasm. Plays a role in the regulation of alternative splicing events. Binds G-rich sequences in pre-mRNAs and keeps target RNA in an unfolded state. The polypeptide is Heterogeneous nuclear ribonucleoprotein F (Hnrnpf) (Mus musculus (Mouse)).